The sequence spans 399 residues: Elongation factor Tu (399 aa).

Residues Lys-10 to Glu-204 enclose the tr-type G domain. Residues Gly-19–Thr-26 are G1. Gly-19–Thr-26 contributes to the GTP binding site. Mg(2+) is bound at residue Thr-26. Residues Gly-60 to Asn-64 form a G2 region. The tract at residues Asp-81 to Gly-84 is G3. Residues Asp-81–His-85 and Asn-136–Asp-139 contribute to the GTP site. Residues Asn-136–Asp-139 form a G4 region. Residues Ser-174–Leu-176 are G5.

The protein belongs to the TRAFAC class translation factor GTPase superfamily. Classic translation factor GTPase family. EF-Tu/EF-1A subfamily. As to quaternary structure, monomer.

Its subcellular location is the cytoplasm. It catalyses the reaction GTP + H2O = GDP + phosphate + H(+). GTP hydrolase that promotes the GTP-dependent binding of aminoacyl-tRNA to the A-site of ribosomes during protein biosynthesis. This Synechococcus sp. (strain CC9605) protein is Elongation factor Tu.